A 401-amino-acid chain; its full sequence is Argininosuccinate synthase (401 aa).

8–16 (AYSGGLDTS) is a binding site for ATP. Tyr-85 serves as a coordination point for L-citrulline. Position 115 (Gly-115) interacts with ATP. Thr-117, Asn-121, and Asp-122 together coordinate L-aspartate. Asn-121 serves as a coordination point for L-citrulline. The L-citrulline site is built by Arg-125, Ser-173, Glu-258, and Tyr-270.

The protein belongs to the argininosuccinate synthase family. Type 1 subfamily. As to quaternary structure, homotetramer.

It localises to the cytoplasm. It carries out the reaction L-citrulline + L-aspartate + ATP = 2-(N(omega)-L-arginino)succinate + AMP + diphosphate + H(+). The protein operates within amino-acid biosynthesis; L-arginine biosynthesis; L-arginine from L-ornithine and carbamoyl phosphate: step 2/3. The sequence is that of Argininosuccinate synthase from Staphylococcus aureus (strain Mu3 / ATCC 700698).